We begin with the raw amino-acid sequence, 642 residues long: Mini-chromosome maintenance complex-binding protein (642 aa).

The segment covering 151–161 has biased composition (polar residues); it reads ARVSPSTSYTP. The segment at 151–197 is disordered; that stretch reads ARVSPSTSYTPSRHKRSYEDDDDMDLQPNKQKDQHAGARQAGSVGGL. Position 154 is a phosphoserine (Ser154). Thr160 is subject to Phosphothreonine. Phosphoserine occurs at positions 167 and 298.

This sequence belongs to the MCMBP family. In terms of assembly, interacts with the MCM complex: associates with the MCM3-7 complex which lacks MCM2, while it does not interact with the MCM complex when MCM2 is present (MCM2-7 complex). Interacts with the RPA complex, when composed of all RPA1, RPA2 and RPA3 components, but not with RPA1 or RPA2 alone.

The protein resides in the nucleus. Its function is as follows. Associated component of the MCM complex that acts as a regulator of DNA replication. Binds to the MCM complex during late S phase and promotes the disassembly of the MCM complex from chromatin, thereby acting as a key regulator of pre-replication complex (pre-RC) unloading from replicated DNA. Can dissociate the MCM complex without addition of ATP; probably acts by destabilizing interactions of each individual subunits of the MCM complex. Required for sister chromatid cohesion. In Homo sapiens (Human), this protein is Mini-chromosome maintenance complex-binding protein (MCMBP).